We begin with the raw amino-acid sequence, 876 residues long: Serrate RNA effector molecule homolog (876 aa).

The segment at 1 to 90 (MGDSDDEYDR…RRDWDEHSSD (90 aa)) is disordered. An N-acetylglycine modification is found at G2. At S4 the chain carries Phosphoserine. The residue at position 8 (Y8) is a Phosphotyrosine. Positions 8–73 (YDRRRRDKFR…ERFSPPRHEL (66 aa)) are enriched in basic and acidic residues. Phosphoserine is present on residues S67, S74, and S136. Residue K150 forms a Glycyl lysine isopeptide (Lys-Gly) (interchain with G-Cter in SUMO2) linkage. Positions 272–413 (EEEEQAGKPG…PKDAPGLECK (142 aa)) are disordered. Positions 297–347 (DGERKANEKDDKKEDGKQAENESSSDDKIKKSEGDGDKEEKKEDSEKEAKK) are enriched in basic and acidic residues. Acidic residues predominate over residues 370–387 (SESESESGQAEEEKEEAD). A compositionally biased stretch (basic and acidic residues) spans 388 to 413 (ETLKEKEKPKEEEREKPKDAPGLECK). Residue S493 is modified to Phosphoserine. Position 544 is a phosphothreonine (T544). A Phosphoserine modification is found at S570. The disordered stretch occupies residues 575 to 597 (ELLGSSGGAPPEEPPKEGNPAEI). The residue at position 671 (T671) is a Phosphothreonine. S679 bears the Phosphoserine mark. Omega-N-methylarginine is present on residues R833, R840, and R850. The tract at residues 835–854 (NYDAFRGQGGYPGKPRNRMV) is disordered.

The protein belongs to the ARS2 family. In terms of assembly, interacts with CASP8AP2, ERBB4, NCBP1/CBP80 and DROSHA. Interacts with LUZP4. Interacts with NCBP2/CBP20 and NCBP3. Interacts with MTREX.

The protein resides in the nucleus. The protein localises to the nucleoplasm. Its subcellular location is the cytoplasm. In terms of biological role, acts as a mediator between the cap-binding complex (CBC) and the primary microRNAs (miRNAs) processing machinery during cell proliferation. Contributes to the stability and delivery of capped primary miRNA transcripts to the primary miRNA processing complex containing DGCR8 and DROSHA, thereby playing a role in RNA-mediated gene silencing (RNAi) by miRNAs. Binds capped RNAs (m7GpppG-capped RNA); however interaction is probably mediated via its interaction with NCBP1/CBP80 component of the CBC complex. Involved in cell cycle progression at S phase. Does not directly confer arsenite resistance but rather modulates arsenic sensitivity. Independently of its activity on miRNAs, necessary and sufficient to promote neural stem cell self-renewal. Does so by directly binding SOX2 promoter and positively regulating its transcription. This Bos taurus (Bovine) protein is Serrate RNA effector molecule homolog (SRRT).